A 310-amino-acid polypeptide reads, in one-letter code: Proline-rich 28 kDa antigen (310 aa).

The first 32 residues, 1–32, serve as a signal peptide directing secretion; that stretch reads MIQIARTWRVFAGGMATGFIGVVLVTAGKASA. The interval 278 to 310 is disordered; that stretch reads QAPAPAPGSAPVGLPGQAPGYPPAGTLTPVPPR.

The protein to M.leprae ML0031.

In Mycobacterium bovis (strain ATCC BAA-935 / AF2122/97), this protein is Proline-rich 28 kDa antigen (mtc28).